The sequence spans 1384 residues: DNA-directed RNA polymerase subunit beta' (1384 aa).

Zn(2+)-binding residues include Cys-81, Cys-83, Cys-96, and Cys-99. Mg(2+) contacts are provided by Asp-472, Asp-474, and Asp-476.

It belongs to the RNA polymerase beta' chain family. As to quaternary structure, the RNAP catalytic core consists of 2 alpha, 1 beta, 1 beta' and 1 omega subunit. When a sigma factor is associated with the core the holoenzyme is formed, which can initiate transcription. Mg(2+) serves as cofactor. Requires Zn(2+) as cofactor.

The catalysed reaction is RNA(n) + a ribonucleoside 5'-triphosphate = RNA(n+1) + diphosphate. In terms of biological role, DNA-dependent RNA polymerase catalyzes the transcription of DNA into RNA using the four ribonucleoside triphosphates as substrates. This Opitutus terrae (strain DSM 11246 / JCM 15787 / PB90-1) protein is DNA-directed RNA polymerase subunit beta'.